The sequence spans 440 residues: Gap junction gamma-2 protein (440 aa).

Residues 1–21 (MTNMSWSFLTRLLEEIHNHST) are Cytoplasmic-facing. Residues 22–42 (FVGKVWLTVLVVFRIVLTAVG) form a helical membrane-spanning segment. Topologically, residues 43–78 (GESIYSDEQSKFTCNTRQPGCDNVCYDAFAPLSHVR) are extracellular. The chain crosses the membrane as a helical span at residues 79-99 (FWVFQIVVISTPSVMYLGYAV). Residues 100-223 (HRLARASEQE…AQLVVRAAFE (124 aa)) are Cytoplasmic-facing. The interval 108-199 (QERRRALRRR…TPGPAGQHDG (92 aa)) is disordered. Residues 112–124 (RALRRRPGPRRLP) are compositionally biased toward basic residues. Residues 150–173 (LEEDEDEEPGAPEGPGEDTEEERT) are compositionally biased toward acidic residues. A helical membrane pass occupies residues 224–244 (VAFLVGQYLLYGFEVPPFFAC). The Extracellular segment spans residues 245 to 264 (SRQPCPHVVDCFVSRPTEKT). Residues 265-285 (VFLLVMYVVSCLCLLLNLCEM) form a helical membrane-spanning segment. Over 286–440 (AHLGLGSAQD…SRDGKATVWI (155 aa)) the chain is Cytoplasmic. Residues 368 to 440 (ADRDSPPCSG…SRDGKATVWI (73 aa)) form a disordered region. Phosphoserine is present on Ser372. The segment covering 380-401 (ATSRGPPRAGGPASGTGSATSG) has biased composition (low complexity).

It belongs to the connexin family. Gamma-type subfamily. A connexon is composed of a hexamer of connexins. Interacts with TJP1. Mainly expressed by oligodendrocytes in the central nervous system. Expressed in optic nerve (at protein level).

Its subcellular location is the cell membrane. It is found in the cell junction. The protein localises to the gap junction. Functionally, one gap junction consists of a cluster of closely packed pairs of transmembrane channels, the connexons, through which materials of low MW diffuse from one cell to a neighboring cell. May play a role in myelination in central and peripheral nervous systems. This Rattus norvegicus (Rat) protein is Gap junction gamma-2 protein (Gjc2).